The chain runs to 55 residues: uncharacterized protein (55 aa).

The protein resides in the plastid. This is an uncharacterized protein from Cuscuta reflexa (Southern Asian dodder).